Here is a 303-residue protein sequence, read N- to C-terminus: MTKEEMQMAMVQPKSQRLRLLGTHFLMLCFIALIMFPLLMVIAISLRPGNFATGSLIPDQISWEHWKLALGMSVTHADGSVTPPPFPVMLWLWNSIKIALITAMGIVALSTTCAYAFARMRFRGKSALLKGMLIFQMFPAVLSLVALYALFDRIGQYMPFIGLNTHGGVIFAYMGGIALHVWTIKGYFETIDNSLEEAAALDGATPWQAFRLVLLPLSVPILAVVFILSFIAAITEVPVASLLLRDVNSYTLAVGMQQYLNPQNYLWGDFAAAAVLSAIPITTVFLLAQRWLVGGLTAGGVKG.

Residues 1-19 lie on the Cytoplasmic side of the membrane; that stretch reads MTKEEMQMAMVQPKSQRLR. The helical transmembrane segment at 20–42 threads the bilayer; it reads LLGTHFLMLCFIALIMFPLLMVI. Topologically, residues 43–95 are periplasmic; sequence AISLRPGNFATGSLIPDQISWEHWKLALGMSVTHADGSVTPPPFPVMLWLWNS. One can recognise an ABC transmembrane type-1 domain in the interval 92-288; it reads LWNSIKIALI…IPITTVFLLA (197 aa). A helical membrane pass occupies residues 96-118; sequence IKIALITAMGIVALSTTCAYAFA. Topologically, residues 119–130 are cytoplasmic; sequence RMRFRGKSALLK. A helical membrane pass occupies residues 131–150; the sequence is GMLIFQMFPAVLSLVALYAL. Over 151–159 the chain is Periplasmic; the sequence is FDRIGQYMP. The helical transmembrane segment at 160-182 threads the bilayer; sequence FIGLNTHGGVIFAYMGGIALHVW. Residues 183–211 are Cytoplasmic-facing; it reads TIKGYFETIDNSLEEAAALDGATPWQAFR. Residues 212–234 traverse the membrane as a helical segment; sequence LVLLPLSVPILAVVFILSFIAAI. The Periplasmic portion of the chain corresponds to 235-265; the sequence is TEVPVASLLLRDVNSYTLAVGMQQYLNPQNY. A helical membrane pass occupies residues 266–288; it reads LWGDFAAAAVLSAIPITTVFLLA. Topologically, residues 289–303 are cytoplasmic; it reads QRWLVGGLTAGGVKG.

It belongs to the binding-protein-dependent transport system permease family. MalFG subfamily. In terms of assembly, the complex is composed of two ATP-binding proteins (MalK), two transmembrane proteins (MalG and MalF) and a solute-binding protein (MalE).

The protein resides in the cell inner membrane. Its function is as follows. Part of the ABC transporter complex MalEFGK involved in maltose/maltodextrin import. Probably responsible for the translocation of the substrate across the membrane. The polypeptide is Maltose/maltodextrin transport system permease protein MalG (malG) (Yersinia pestis).